Consider the following 144-residue polypeptide: 3-dehydroquinate dehydratase (144 aa).

The active-site Proton acceptor is Tyr22. Substrate contacts are provided by Asn74, His80, and Asp87. His100 (proton donor) is an active-site residue. Substrate-binding positions include Leu101–Ser102 and Arg111.

It belongs to the type-II 3-dehydroquinase family. In terms of assembly, homododecamer.

The catalysed reaction is 3-dehydroquinate = 3-dehydroshikimate + H2O. It functions in the pathway metabolic intermediate biosynthesis; chorismate biosynthesis; chorismate from D-erythrose 4-phosphate and phosphoenolpyruvate: step 3/7. Catalyzes a trans-dehydration via an enolate intermediate. The sequence is that of 3-dehydroquinate dehydratase from Clostridium perfringens (strain ATCC 13124 / DSM 756 / JCM 1290 / NCIMB 6125 / NCTC 8237 / Type A).